A 356-amino-acid chain; its full sequence is UDP-3-O-acylglucosamine N-acyltransferase (356 aa).

The Proton acceptor role is filled by histidine 242.

The protein belongs to the transferase hexapeptide repeat family. LpxD subfamily. Homotrimer.

It carries out the reaction a UDP-3-O-[(3R)-3-hydroxyacyl]-alpha-D-glucosamine + a (3R)-hydroxyacyl-[ACP] = a UDP-2-N,3-O-bis[(3R)-3-hydroxyacyl]-alpha-D-glucosamine + holo-[ACP] + H(+). Its pathway is bacterial outer membrane biogenesis; LPS lipid A biosynthesis. Its function is as follows. Catalyzes the N-acylation of UDP-3-O-acylglucosamine using 3-hydroxyacyl-ACP as the acyl donor. Is involved in the biosynthesis of lipid A, a phosphorylated glycolipid that anchors the lipopolysaccharide to the outer membrane of the cell. This is UDP-3-O-acylglucosamine N-acyltransferase from Acinetobacter baumannii (strain ACICU).